The primary structure comprises 357 residues: MEVSENATTRGSLALVSIILPVHNAEQWLDECLMSVLQQDFEGAMELSVFNDASKDKSRAIIEKWKVKLEDSGISVVIGGHDSPSPRGVGYSKNQAVAQSTGSYLCFLDSDDVMMPQRVRMQYEAAGQHPTSIIGCQVRRDPPDSTERYTRWINHLTSDQLLTQVFTSHGPTVIMPTWFCSRAWFSHVGPFDEGGQGVPEDLLFFYEHLRKGGGVFRVDHSLLLYRYHLYAATHSVLEMTIWTHRVHFLEEQVLPHWKSFTIWNAGKQGRKLYRSLTAASRHKVVAFCDVDENKIRKGFYCYEDSQERPKPKVPILHFQAAQSPFVICVKLDLTGGEFEDNLKSLDLQEGRDFVHFS.

This sequence belongs to the glycosyltransferase 2 family.

The protein localises to the cytoplasm. The catalysed reaction is queuosine(34) in tRNA(Tyr) + UDP-alpha-D-galactose = O-5''-beta-D-galactosylqueuosine(34) in tRNA(Tyr) + UDP + H(+). Its function is as follows. Glycosyltransferase that specifically catalyzes galactosylation of cytoplasmic tRNA(Tyr) modified with queuosine at position 34 (queuosine(34)). Galactosylates the cyclopentene hydroxyl group of queuosine(34) in tRNA(Tyr) to form galactosyl-queuosine(34). Mannosylation of queuosine(34) in tRNA(Tyr) is required to slow-down elongation at cognate codons UAC and suppress stop codon readthrough, thereby regulating protein translation. In Mus musculus (Mouse), this protein is Queuosine-tRNA galactosyltransferase.